Here is a 695-residue protein sequence, read N- to C-terminus: Elongation factor G 1 (695 aa).

Positions 6–284 constitute a tr-type G domain; sequence SKVRNIGISA…AVETYLPCPT (279 aa). GTP-binding positions include 15–22, 82–86, and 136–139; these read AHIDSGKT, DTPGH, and NKCD.

The protein belongs to the TRAFAC class translation factor GTPase superfamily. Classic translation factor GTPase family. EF-G/EF-2 subfamily.

The protein localises to the cytoplasm. In terms of biological role, catalyzes the GTP-dependent ribosomal translocation step during translation elongation. During this step, the ribosome changes from the pre-translocational (PRE) to the post-translocational (POST) state as the newly formed A-site-bound peptidyl-tRNA and P-site-bound deacylated tRNA move to the P and E sites, respectively. Catalyzes the coordinated movement of the two tRNA molecules, the mRNA and conformational changes in the ribosome. This chain is Elongation factor G 1, found in Desulfotalea psychrophila (strain LSv54 / DSM 12343).